A 302-amino-acid chain; its full sequence is MSVPDATVVKAFLLDLQNRICAGLEQLDGQASFAADSWTRTEGGGGTSRVLTQGAVFEQAGVNFSHVTGAAMPASATAHRPELAGRSFEAMGVSLVIHPKNPYIPTTHANVRFFIAHKDGADPVWWFGGGFDLTPYYPFEEDVREWHQTAKNLCLPFGDDIYPKYKKWCDEYFFLPHRNETRGVGGLFFDDLNQAGFDKSFDFMQAVGNGFLTAYAPIVERRKETPYGEREREFQLYRRGRYVEFNLVYDRGTLFGLQTGGRTESILMSMPPLVRWQYAYTPEAGSPEADLYDNYLKPRDWV.

Ser-94 is a substrate binding site. 2 residues coordinate a divalent metal cation: His-98 and His-108. His-108 functions as the Proton donor in the catalytic mechanism. 110-112 (NVR) is a substrate binding site. Positions 147 and 177 each coordinate a divalent metal cation. An important for dimerization region spans residues 242–277 (YVEFNLVYDRGTLFGLQTGGRTESILMSMPPLVRWQ). 260–262 (GGR) contacts substrate.

Belongs to the aerobic coproporphyrinogen-III oxidase family. Homodimer. The cofactor is a divalent metal cation.

The protein resides in the cytoplasm. The catalysed reaction is coproporphyrinogen III + O2 + 2 H(+) = protoporphyrinogen IX + 2 CO2 + 2 H2O. The protein operates within porphyrin-containing compound metabolism; protoporphyrin-IX biosynthesis; protoporphyrinogen-IX from coproporphyrinogen-III (O2 route): step 1/1. Functionally, involved in the heme biosynthesis. Catalyzes the aerobic oxidative decarboxylation of propionate groups of rings A and B of coproporphyrinogen-III to yield the vinyl groups in protoporphyrinogen-IX. The protein is Oxygen-dependent coproporphyrinogen-III oxidase of Shewanella sp. (strain MR-4).